Here is a 322-residue protein sequence, read N- to C-terminus: Zinc finger C2HC domain-containing protein zchc-1A (322 aa).

C2HC/C3H-type zinc fingers lie at residues 9–38 and 119–148; these read PTFP…LASL and DYVQ…QATR. The Zn(2+) site is built by Cys13, Cys16, His28, Cys32, Cys123, Cys126, His138, and Cys142. Residues 150 to 159 show a composition bias toward polar residues; sequence QGGNLKSSGG. The tract at residues 150–322 is disordered; sequence QGGNLKSSGG…SRNNSRSRIF (173 aa). Over residues 174 to 220 the composition is skewed to basic and acidic residues; the sequence is NEGKKQESSSRNGSAERKPTTRGRDGSLLRARRDDSNDITSRRKSLD. Composition is skewed to polar residues over residues 221–238 and 264–274; these read TRTS…TSLS and LQQSSTPQQRL. Positions 276-295 are enriched in low complexity; the sequence is TPASTTTTASRSGSRTSSRA. The segment covering 296-305 has biased composition (basic and acidic residues); sequence CPRDDSRDSR. Residues 311 to 322 are compositionally biased toward low complexity; the sequence is NNSRNNSRSRIF.

The protein belongs to the ZC2HC1 family. The cofactor is Zn(2+).

This chain is Zinc finger C2HC domain-containing protein zchc-1A, found in Caenorhabditis elegans.